Consider the following 307-residue polypeptide: 4-hydroxy-tetrahydrodipicolinate synthase (307 aa).

T49 contributes to the pyruvate binding site. Residue Y138 is the Proton donor/acceptor of the active site. K166 (schiff-base intermediate with substrate) is an active-site residue. I207 serves as a coordination point for pyruvate.

The protein belongs to the DapA family. Homotetramer; dimer of dimers.

It is found in the cytoplasm. The catalysed reaction is L-aspartate 4-semialdehyde + pyruvate = (2S,4S)-4-hydroxy-2,3,4,5-tetrahydrodipicolinate + H2O + H(+). Its pathway is amino-acid biosynthesis; L-lysine biosynthesis via DAP pathway; (S)-tetrahydrodipicolinate from L-aspartate: step 3/4. Its function is as follows. Catalyzes the condensation of (S)-aspartate-beta-semialdehyde [(S)-ASA] and pyruvate to 4-hydroxy-tetrahydrodipicolinate (HTPA). The protein is 4-hydroxy-tetrahydrodipicolinate synthase of Limosilactobacillus reuteri (strain DSM 20016) (Lactobacillus reuteri).